We begin with the raw amino-acid sequence, 682 residues long: Potassium-transporting ATPase ATP-binding subunit (682 aa).

Helical transmembrane passes span 34 to 54 (PVMF…IAMA), 62 to 82 (ALFS…ANFA), 219 to 239 (IALT…TATL), and 254 to 274 (VLVA…LSAI). Residue Asp-307 is the 4-aspartylphosphate intermediate of the active site. Residues Asp-344, Glu-348, 377–384 (FTAQSRMS), and Lys-395 contribute to the ATP site. Mg(2+) contacts are provided by Asp-518 and Asp-522. The next 3 membrane-spanning stretches (helical) occupy residues 588-608 (FAII…LNIM), 616-636 (AILS…PLAL), and 656-676 (IYGL…DLLL).

Belongs to the cation transport ATPase (P-type) (TC 3.A.3) family. Type IA subfamily. As to quaternary structure, the system is composed of three essential subunits: KdpA, KdpB and KdpC.

The protein resides in the cell inner membrane. It catalyses the reaction K(+)(out) + ATP + H2O = K(+)(in) + ADP + phosphate + H(+). Its function is as follows. Part of the high-affinity ATP-driven potassium transport (or Kdp) system, which catalyzes the hydrolysis of ATP coupled with the electrogenic transport of potassium into the cytoplasm. This subunit is responsible for energy coupling to the transport system and for the release of the potassium ions to the cytoplasm. The chain is Potassium-transporting ATPase ATP-binding subunit from Escherichia coli O17:K52:H18 (strain UMN026 / ExPEC).